Reading from the N-terminus, the 89-residue chain is Small ribosomal subunit protein bS20 (89 aa).

The interval 68–89 is disordered; the sequence is PNKGARKSSRLDHFVNEQKSKQ. The segment covering 76 to 89 has biased composition (basic and acidic residues); that stretch reads SRLDHFVNEQKSKQ.

This sequence belongs to the bacterial ribosomal protein bS20 family.

Its function is as follows. Binds directly to 16S ribosomal RNA. This Mycoplasmopsis agalactiae (strain NCTC 10123 / CIP 59.7 / PG2) (Mycoplasma agalactiae) protein is Small ribosomal subunit protein bS20.